We begin with the raw amino-acid sequence, 335 residues long: Glyceraldehyde-3-phosphate dehydrogenase (335 aa).

NAD(+)-binding positions include 12-13, D34, R78, and S120; that span reads RI. Residues 151–153 and T182 contribute to the D-glyceraldehyde 3-phosphate site; that span reads SCT. C152 functions as the Nucleophile in the catalytic mechanism. N183 contributes to the NAD(+) binding site. D-glyceraldehyde 3-phosphate is bound by residues R197, 210 to 211, and R233; that span reads TG. N315 is an NAD(+) binding site.

The protein belongs to the glyceraldehyde-3-phosphate dehydrogenase family. Homotetramer.

It localises to the cytoplasm. The enzyme catalyses D-glyceraldehyde 3-phosphate + phosphate + NAD(+) = (2R)-3-phospho-glyceroyl phosphate + NADH + H(+). It functions in the pathway carbohydrate degradation; glycolysis; pyruvate from D-glyceraldehyde 3-phosphate: step 1/5. Its function is as follows. Catalyzes the oxidative phosphorylation of glyceraldehyde 3-phosphate (G3P) to 1,3-bisphosphoglycerate (BPG) using the cofactor NAD. The first reaction step involves the formation of a hemiacetal intermediate between G3P and a cysteine residue, and this hemiacetal intermediate is then oxidized to a thioester, with concomitant reduction of NAD to NADH. The reduced NADH is then exchanged with the second NAD, and the thioester is attacked by a nucleophilic inorganic phosphate to produce BPG. The chain is Glyceraldehyde-3-phosphate dehydrogenase (gap) from Priestia megaterium (strain DSM 319 / IMG 1521) (Bacillus megaterium).